The chain runs to 748 residues: Disintegrin and metalloproteinase domain-containing protein 10 (748 aa).

Positions 1 to 19 are cleaved as a signal peptide; it reads MVLLRVLILLLSWVAGLGG. A propeptide spanning residues 20–213 is cleaved from the precursor; sequence QYGNPLNKYI…NGPELLRKKR (194 aa). Topologically, residues 20 to 672 are extracellular; the sequence is QYGNPLNKYI…SPELYENIAE (653 aa). The Cysteine switch motif lies at 171–178; sequence GGCADHSV. Cysteine 173 is a Zn(2+) binding site. Residues 220–456 enclose the Peptidase M12B domain; it reads NTCQLYIQTD…KRNNCFVESG (237 aa). N-linked (GlcNAc...) asparagine glycosylation is found at asparagine 267 and asparagine 278. Intrachain disulfides connect cysteine 344–cysteine 451, cysteine 399–cysteine 435, cysteine 460–cysteine 495, cysteine 471–cysteine 484, cysteine 473–cysteine 479, cysteine 483–cysteine 515, cysteine 503–cysteine 511, cysteine 510–cysteine 536, cysteine 524–cysteine 543, cysteine 530–cysteine 562, cysteine 555–cysteine 567, cysteine 572–cysteine 598, cysteine 580–cysteine 607, cysteine 582–cysteine 597, cysteine 594–cysteine 639, and cysteine 632–cysteine 645. Histidine 383 is a Zn(2+) binding site. Glutamate 384 is a catalytic residue. 2 residues coordinate Zn(2+): histidine 387 and histidine 393. Asparagine 439 is a glycosylation site (N-linked (GlcNAc...) asparagine). The Disintegrin domain occupies 457–551; sequence QPICGNGMVE…LCPASDPKPN (95 aa). Asparagine 551 is a glycosylation site (N-linked (GlcNAc...) asparagine). A helical membrane pass occupies residues 673–696; that stretch reads WIVAYWWAVLLMGIALIMLMAGFI. Residues 697 to 748 are Cytoplasmic-facing; that stretch reads KICSVHTPSSNPKLPPPKPLPGTLKRRRPPQPIQQPQRQRPRESYQMGHMRR. Positions 704-748 are disordered; that stretch reads PSSNPKLPPPKPLPGTLKRRRPPQPIQQPQRQRPRESYQMGHMRR. Residues 708-715 carry the SH3-binding motif; sequence PKLPPPKP. The residue at position 719 (threonine 719) is a Phosphothreonine. An SH3-binding motif is present at residues 722–728; it reads RRRPPQP. The interaction with AP2A1, AP2A2 and AP2M1 stretch occupies residues 734 to 748; it reads RQRPRESYQMGHMRR.

In terms of assembly, forms a ternary EFNA5-EPHA3-ADAM10 complex mediating EFNA5 extracellular domain shedding by ADAM10 which regulates the EFNA5-EPHA3 complex internalization and function, the cleavage occurs in trans, with ADAM10 and its substrate being on the membranes of opposing cells. Interacts with the clathrin adapter AP2 complex subunits AP2A1, AP2A2, AP2B1, and AP2M1; this interaction facilitates ADAM10 endocytosis from the plasma membrane during long-term potentiation in hippocampal neurons. Forms a ternary complex composed of ADAM10, EPHA4 and CADH1; within the complex, ADAM10 cleaves CADH1 which disrupts adherens junctions. Interacts with EPHA2. Interacts with NGF in a divalent cation-dependent manner. Interacts with TSPAN14; the interaction promotes ADAM10 maturation and cell surface expression. Interacts with TSPAN5, TSPAN10, TSPAN14, TSPAN15, TSPAN17 and TSPAN33; these interactions regulate ADAM10 substrate specificity, endocytosis and turnover. Interacts (via extracellular domain) with TSPAN33 (via extracellular domain) and (via cytoplasmic domain) with AFDN; interaction with TSPAN33 allows the docking of ADAM10 to zonula adherens through a PDZ11-dependent interaction between TSPAN33 and PLEKHA7 while interaction with AFDN locks ADAM10 at zonula adherens. Interacts with DLG1; this interaction recruits ADAM10 to the cell membrane during long-term depression in hippocampal neurons. Interacts (via extracellular domain) with BACE1 (via extracellular domain). Interacts with FAM171A1. The cofactor is Zn(2+). The precursor is cleaved by furin and PCSK7. In terms of tissue distribution, expressed at low level in kidney, spleen, lung, adrenal, heart and peripheral nerve.

The protein localises to the golgi apparatus membrane. Its subcellular location is the cell membrane. The protein resides in the cytoplasmic vesicle. It localises to the clathrin-coated vesicle. It is found in the cell projection. The protein localises to the axon. Its subcellular location is the dendrite. The protein resides in the cell junction. It localises to the adherens junction. It is found in the cytoplasm. The enzyme catalyses Endopeptidase of broad specificity.. With respect to regulation, catalytically inactive when the propeptide is intact and associated with the mature enzyme. The disintegrin and cysteine-rich regions modulate access of substrates to exerts an inhibitory effect on the cleavage of ADAM10 substrates. In terms of biological role, transmembrane metalloprotease which mediates the ectodomain shedding of a myriad of transmembrane proteins, including adhesion proteins, growth factor precursors and cytokines being essential for development and tissue homeostasis. Associates with six members of the tetraspanin superfamily TspanC8 which regulate its exit from the endoplasmic reticulum and its substrate selectivity. Cleaves the membrane-bound precursor of TNF-alpha at '76-Ala-|-Val-77' to its mature soluble form. Responsible for the proteolytical release of soluble JAM3 from endothelial cells surface. Responsible for the proteolytic release of several other cell-surface proteins, including heparin-binding epidermal growth-like factor, ephrin-A2, CD44, CDH2 and for constitutive and regulated alpha-secretase cleavage of amyloid precursor protein (APP). Contributes to the normal cleavage of the cellular prion protein. Involved in the cleavage of the adhesion molecule L1 at the cell surface and in released membrane vesicles, suggesting a vesicle-based protease activity. Also controls the proteolytic processing of Notch and mediates lateral inhibition during neurogenesis. Required for the development of type 1 transitional B cells into marginal zone B cells, probably by cleaving Notch. Responsible for the FasL ectodomain shedding and for the generation of the remnant ADAM10-processed FasL (FasL APL) transmembrane form. Also cleaves the ectodomain of the integral membrane proteins CORIN and ITM2B. Mediates the proteolytic cleavage of LAG3, leading to release the secreted form of LAG3. Mediates the proteolytic cleavage of IL6R and IL11RA, leading to the release of secreted forms of IL6R and IL11RA. Enhances the cleavage of CHL1 by BACE1. Cleaves NRCAM. Cleaves TREM2, resulting in shedding of the TREM2 ectodomain. Involved in the development and maturation of glomerular and coronary vasculature. During development of the cochlear organ of Corti, promotes pillar cell separation by forming a ternary complex with CADH1 and EPHA4 and cleaving CADH1 at adherens junctions. May regulate the EFNA5-EPHA3 signaling. Regulates leukocyte transmigration as a sheddase for the adherens junction protein VE-cadherin/CDH5 in endothelial cells. The sequence is that of Disintegrin and metalloproteinase domain-containing protein 10 (ADAM10) from Bos taurus (Bovine).